The following is a 447-amino-acid chain: GTPase Der (447 aa).

2 consecutive EngA-type G domains span residues P3–R167 and V181–M354. GTP contacts are provided by residues G9–S16, D56–F60, N119–E122, G187–S194, D234–L238, and N299–D302. Residues V355–K439 form the KH-like domain.

Belongs to the TRAFAC class TrmE-Era-EngA-EngB-Septin-like GTPase superfamily. EngA (Der) GTPase family. As to quaternary structure, associates with the 50S ribosomal subunit.

In terms of biological role, GTPase that plays an essential role in the late steps of ribosome biogenesis. The protein is GTPase Der of Cupriavidus pinatubonensis (strain JMP 134 / LMG 1197) (Cupriavidus necator (strain JMP 134)).